The following is a 433-amino-acid chain: Serine/threonine-protein kinase toxin HipA (433 aa).

Phosphoserine; by autocatalysis is present on S147. Residues 151-154 (VQPK), K178, and 220-222 (ERF) each bind ATP. D306 acts as the Proton acceptor in catalysis. ATP-binding positions include 308-311 (HGKN) and 327-328 (YD). 2 DNA-binding regions span residues 380–384 (RIARR) and R429.

This sequence belongs to the HipA Ser/Thr kinase family. Monomer. Forms a HipA(2)HipB(2)-DNA complex with cognate antitoxin HipB; has higher affinity for the latter when HipB is prebound to DNA and HipA is phosphorylated. Binds DNA in the ternary complex.

It catalyses the reaction L-seryl-[protein] + ATP = O-phospho-L-seryl-[protein] + ADP + H(+). It carries out the reaction L-threonyl-[protein] + ATP = O-phospho-L-threonyl-[protein] + ADP + H(+). In terms of biological role, toxic component of a type II toxin-antitoxin (TA) system; overexpression in wild-type temporarily inhibits cell growth, overexpression in a hipAB deletion leads to acute growth inhibition. The toxic effect of HipA is neutralized by its cognate antitoxin HipB. In the ternary phosphoserine-HipA-HipB-DNA complex the DNA is bent about 125 degrees; all HipA in the crystallized ternary complex is phosphorylated. In E.coli phosphorylation of HipA is thought to release HipB from the HipA-HipB-DNA complex, suggesting the complex functions differently in the 2 bacteria. Phosphorylates Glu-tRNA-ligase (GltX, on 'Ser-239') in vivo, with HipB probably acts as a corepressor for transcription of the hipBA promoter. The protein is Serine/threonine-protein kinase toxin HipA of Shewanella oneidensis (strain ATCC 700550 / JCM 31522 / CIP 106686 / LMG 19005 / NCIMB 14063 / MR-1).